The primary structure comprises 475 residues: Vitronectin (475 aa).

Positions 1 to 19 are cleaved as a signal peptide; that stretch reads MAPLRPIFTLALLLWVVLA. An SMB domain is found at 20–63; that stretch reads DQESCKDRCTEGFNANRKCQCDELCSYYQSCCADYAAECKPQVT. 7 cysteine pairs are disulfide-bonded: Cys-24-Cys-28, Cys-24-Cys-40, Cys-28-Cys-58, Cys-38-Cys-40, Cys-38-Cys-51, Cys-44-Cys-50, and Cys-51-Cys-58. Residues 64–66 carry the Cell attachment site motif; the sequence is RGD. Thr-69 carries the phosphothreonine modification. A sulfotyrosine mark is found at Tyr-75, Tyr-78, and Tyr-80. Asn-87 carries an N-linked (GlcNAc...) asparagine glycan. The interval 87 to 123 is disordered; that stretch reads NASVHAQPESPTVGQEPTLSPDLQTEGGAEPTHEVPL. Over residues 95 to 109 the composition is skewed to polar residues; that stretch reads ESPTVGQEPTLSPDL. 3 Hemopexin repeats span residues 158–202, 203–250, and 251–305; these read GKPF…VWGI, EGPI…FSGI, and PDNV…FEHF. 2 N-linked (GlcNAc...) asparagine glycosylation sites follow: Asn-169 and Asn-242. Tyr-279 and Tyr-282 each carry sulfotyrosine. Ser-312 is modified (phosphoserine). Positions 359–391 are disordered; the sequence is LTPSPSAKKQKSRRRSRKRYRSRYGRGRSQNSR. The span at 366-384 shows a compositional bias: basic residues; the sequence is KKQKSRRRSRKRYRSRYGR. Positions 366 to 392 are glycosaminoglycan binding region; that stretch reads KKQKSRRRSRKRYRSRYGRGRSQNSRR. Ser-394 is modified (phosphoserine). Residues 419 to 469 form a Hemopexin 4 repeat; sequence TSWLKPATSEPIQSVYFFSGDKYYRVNLRTQRVDTVNPPYPRSIAQYWLGC.

Interacts with SERPINE1/PAI1 and C1QBP. Monomer. Post-translationally, sulfated on tyrosine residues. In terms of processing, N- and O-glycosylated. It has been suggested that the active SMB domain may be permitted considerable disulfide bond heterogeneity or variability, thus two alternate disulfide patterns based on 3D structures are described with 1 disulfide bond conserved in both. Plasma.

It localises to the secreted. The protein localises to the extracellular space. In terms of biological role, vitronectin is a cell adhesion and spreading factor found in serum and tissues. Vitronectin interact with glycosaminoglycans and proteoglycans. Is recognized by certain members of the integrin family and serves as a cell-to-substrate adhesion molecule. Inhibitor of the membrane-damaging effect of the terminal cytolytic complement pathway. This Oryctolagus cuniculus (Rabbit) protein is Vitronectin (VTN).